The primary structure comprises 566 residues: Proline--tRNA ligase (566 aa).

It belongs to the class-II aminoacyl-tRNA synthetase family. ProS type 1 subfamily. As to quaternary structure, homodimer.

The protein localises to the cytoplasm. The enzyme catalyses tRNA(Pro) + L-proline + ATP = L-prolyl-tRNA(Pro) + AMP + diphosphate. Its function is as follows. Catalyzes the attachment of proline to tRNA(Pro) in a two-step reaction: proline is first activated by ATP to form Pro-AMP and then transferred to the acceptor end of tRNA(Pro). As ProRS can inadvertently accommodate and process non-cognate amino acids such as alanine and cysteine, to avoid such errors it has two additional distinct editing activities against alanine. One activity is designated as 'pretransfer' editing and involves the tRNA(Pro)-independent hydrolysis of activated Ala-AMP. The other activity is designated 'posttransfer' editing and involves deacylation of mischarged Ala-tRNA(Pro). The misacylated Cys-tRNA(Pro) is not edited by ProRS. In Coxiella burnetii (strain RSA 493 / Nine Mile phase I), this protein is Proline--tRNA ligase.